Here is a 353-residue protein sequence, read N- to C-terminus: Probable transport protein YPL264C (353 aa).

The Cytoplasmic portion of the chain corresponds to 1–16; the sequence is MTLQRISKDYLKPNYG. The helical transmembrane segment at 17–37 threads the bilayer; it reads LILLIVSYFFNSSMVVSTKVL. The 137-residue stretch at 24 to 160 folds into the EamA 1 domain; that stretch reads YFFNSSMVVS…SFSGVVLIIR (137 aa). Residues 38–51 are Extracellular-facing; the sequence is ENDPLETSQSRINP. The chain crosses the membrane as a helical span at residues 52–69; it reads LQILLVRMSITYCCTLVY. Residues 70–94 lie on the Cytoplasmic side of the membrane; that stretch reads MHWNKQSVPDIPWGPAPCRKWLILR. Residues 95-115 traverse the membrane as a helical segment; that stretch reads GIMGFFGVFGMYFSLMYLSIS. A topological domain (extracellular) is located at residue Asp116. A helical transmembrane segment spans residues 117–137; the sequence is AVLITFMSPTLTIFLSFLLLG. The Cytoplasmic portion of the chain corresponds to 138–144; it reads EPFSKLE. Residues 145 to 165 form a helical membrane-spanning segment; sequence ALGSLISFSGVVLIIRPTFLF. The Extracellular portion of the chain corresponds to 166–188; that stretch reads GEQTQGQQSPQDDIVETQNPKLR. Residues 189–209 form a helical membrane-spanning segment; that stretch reads LIAIGVSLLGVCGLSSVYIII. The EamA 2 domain maps to 200–326; it reads CGLSSVYIII…IVSSTIWVIN (127 aa). The Cytoplasmic segment spans residues 210–218; sequence RYIGNKAHA. The chain crosses the membrane as a helical span at residues 219 to 239; that stretch reads IMSVSYFSLVTTVVAALGVLL. The Extracellular portion of the chain corresponds to 240–254; it reads IPSMSLQLPHSWKQW. A helical transmembrane segment spans residues 255 to 275; that stretch reads GLFLNLGISGFIHQILLTMGI. Over 276–282 the chain is Cytoplasmic; sequence QRERAGR. The helical transmembrane segment at 283-303 threads the bilayer; the sequence is GSLMTYTQVIYAVFWDVVLFH. A topological domain (extracellular) is located at residue His304. The chain crosses the membrane as a helical span at residues 305–325; it reads WPNIWTWCGMAVIVSSTIWVI. The Cytoplasmic portion of the chain corresponds to 326–353; sequence NMRASKQNVVATAELLSTSDFELDDLED.

It localises to the membrane. This Saccharomyces cerevisiae (strain ATCC 204508 / S288c) (Baker's yeast) protein is Probable transport protein YPL264C.